Reading from the N-terminus, the 309-residue chain is Protoheme IX farnesyltransferase (309 aa).

Transmembrane regions (helical) follow at residues 35–55 (IGIV…ALYF), 64–84 (LHIV…SCSI), 114–134 (VLWL…MTTV), 135–155 (TAAI…TMWS), 161–181 (LNTV…WTAV), 187–207 (VVPL…FLAL), 236–256 (IVVW…LGVP), 257–277 (FLTV…YGFK), and 289–309 (FIYS…ATLW).

This sequence belongs to the UbiA prenyltransferase family. Protoheme IX farnesyltransferase subfamily. As to quaternary structure, interacts with CtaA.

It is found in the cell membrane. It carries out the reaction heme b + (2E,6E)-farnesyl diphosphate + H2O = Fe(II)-heme o + diphosphate. It participates in porphyrin-containing compound metabolism; heme O biosynthesis; heme O from protoheme: step 1/1. Its function is as follows. Converts heme B (protoheme IX) to heme O by substitution of the vinyl group on carbon 2 of heme B porphyrin ring with a hydroxyethyl farnesyl side group. This is Protoheme IX farnesyltransferase from Geobacillus sp. (strain WCH70).